A 284-amino-acid chain; its full sequence is 3-methyl-2-oxobutanoate hydroxymethyltransferase (284 aa).

Mg(2+)-binding residues include aspartate 44 and aspartate 83. 3-methyl-2-oxobutanoate is bound by residues 44–45 (DS), aspartate 83, and lysine 112. Mg(2+) is bound at residue glutamate 114. The active-site Proton acceptor is the glutamate 181.

This sequence belongs to the PanB family. Homodecamer; pentamer of dimers. Requires Mg(2+) as cofactor.

It is found in the cytoplasm. The catalysed reaction is 3-methyl-2-oxobutanoate + (6R)-5,10-methylene-5,6,7,8-tetrahydrofolate + H2O = 2-dehydropantoate + (6S)-5,6,7,8-tetrahydrofolate. Its pathway is cofactor biosynthesis; coenzyme A biosynthesis. With respect to regulation, neither activated nor inhibited by coenzyme A. Its function is as follows. Catalyzes the reversible reaction in which hydroxymethyl group from 5,10-methylenetetrahydrofolate is transferred onto alpha-ketoisovalerate to form ketopantoate. The polypeptide is 3-methyl-2-oxobutanoate hydroxymethyltransferase (Thermococcus kodakarensis (strain ATCC BAA-918 / JCM 12380 / KOD1) (Pyrococcus kodakaraensis (strain KOD1))).